The sequence spans 977 residues: Macrophage colony-stimulating factor 1 receptor (977 aa).

An N-terminal signal peptide occupies residues 1-18 (MFFALLFLIGILLGQVQG). Over 19–519 (WSEPRIRLSS…MEVSDQIFTS (501 aa)) the chain is Extracellular. 5 consecutive Ig-like C2-type domains span residues 22–109 (PRIR…VHVF), 120–198 (PSTS…EKVS), 213–305 (PYVY…TQLL), 316–407 (PKLS…ASIT), and 408–513 (FDIK…MEVS). C48 and C92 are disulfide-bonded. Residues N98, N101, N154, N163, N244, N286, N298, N361, N424, and N455 are each glycosylated (N-linked (GlcNAc...) asparagine). 2 disulfide bridges follow: C138-C187 and C234-C289. Residues C430 and C495 are joined by a disulfide bond. The helical transmembrane segment at 520 to 540 (AMCGSTVAMVVLGLLLIFMIY) threads the bilayer. The Cytoplasmic portion of the chain corresponds to 541 to 977 (KYKQKPRYEI…LMKPNNYQFC (437 aa)). A regulatory juxtamembrane domain region spans residues 544-576 (QKPRYEIRWKIIEATNGNNYTFIDPTQLPYNEK). Phosphotyrosine; by autocatalysis is present on Y563. The Protein kinase domain maps to 584 to 917 (LKLGKTLGAG…KISQMIQRML (334 aa)). ATP is bound by residues 590–598 (LGAGAFGKV) and K618. Phosphotyrosine; by autocatalysis is present on residues Y701 and Y725. The active-site Proton acceptor is D781. The tract at residues 799-821 (DFGLARDIMNDSNYVVKGNARLP) is activation loop. Y812 and Y929 each carry phosphotyrosine; by autocatalysis. The interval 919–977 (ETSEQQDTQEYKNIPTEAEAEQQLESCDPVKHEDESFETSCDQEEEDQPLMKPNNYQFC) is disordered. Positions 953–966 (ESFETSCDQEEEDQ) are enriched in acidic residues. At Y974 the chain carries Phosphotyrosine; by autocatalysis.

The protein belongs to the protein kinase superfamily. Tyr protein kinase family. CSF-1/PDGF receptor subfamily. Monomer. Homodimer. Interacts with CSF1. In terms of processing, autophosphorylated in response to CSF1 binding. autophosphorylation, leading to its degradation. Ubiquitinated. Becomes rapidly polyubiquitinated after autophosphorylation, leading to its degradation.

Its subcellular location is the cell membrane. The enzyme catalyses L-tyrosyl-[protein] + ATP = O-phospho-L-tyrosyl-[protein] + ADP + H(+). Present in an inactive conformation in the absence of bound ligand. CSF1 binding leads to dimerization and activation by autophosphorylation on tyrosine residues. In terms of biological role, tyrosine-protein kinase that acts as a cell-surface receptor for CSF1 and plays an essential role in the regulation of survival, proliferation and differentiation of hematopoietic precursor cells, especially mononuclear phagocytes, such as macrophages and monocytes. Plays an important role in innate immunity and in inflammatory processes. Plays an important role in the regulation of osteoclast proliferation and differentiation, the regulation of bone resorption, and is required for normal bone development. Promotes reorganization of the actin cytoskeleton, regulates formation of membrane ruffles, cell adhesion and cell migration. Activates several signaling pathways in response to ligand binding. The chain is Macrophage colony-stimulating factor 1 receptor (csf1r) from Danio rerio (Zebrafish).